Here is a 95-residue protein sequence, read N- to C-terminus: Aspartyl/glutamyl-tRNA(Asn/Gln) amidotransferase subunit C (95 aa).

The protein belongs to the GatC family. In terms of assembly, heterotrimer of A, B and C subunits.

It catalyses the reaction L-glutamyl-tRNA(Gln) + L-glutamine + ATP + H2O = L-glutaminyl-tRNA(Gln) + L-glutamate + ADP + phosphate + H(+). It carries out the reaction L-aspartyl-tRNA(Asn) + L-glutamine + ATP + H2O = L-asparaginyl-tRNA(Asn) + L-glutamate + ADP + phosphate + 2 H(+). In terms of biological role, allows the formation of correctly charged Asn-tRNA(Asn) or Gln-tRNA(Gln) through the transamidation of misacylated Asp-tRNA(Asn) or Glu-tRNA(Gln) in organisms which lack either or both of asparaginyl-tRNA or glutaminyl-tRNA synthetases. The reaction takes place in the presence of glutamine and ATP through an activated phospho-Asp-tRNA(Asn) or phospho-Glu-tRNA(Gln). This Hydrogenovibrio crunogenus (strain DSM 25203 / XCL-2) (Thiomicrospira crunogena) protein is Aspartyl/glutamyl-tRNA(Asn/Gln) amidotransferase subunit C.